We begin with the raw amino-acid sequence, 214 residues long: Octanoyltransferase (214 aa).

The 186-residue stretch at 29 to 214 (STTPDEIWIL…EHLQKQLMPT (186 aa)) folds into the BPL/LPL catalytic domain. Residues 69–76 (RGGEITYH), 146–148 (ALG), and 159–161 (GLA) contribute to the substrate site. The active-site Acyl-thioester intermediate is Cys177.

This sequence belongs to the LipB family.

The protein resides in the cytoplasm. The catalysed reaction is octanoyl-[ACP] + L-lysyl-[protein] = N(6)-octanoyl-L-lysyl-[protein] + holo-[ACP] + H(+). It participates in protein modification; protein lipoylation via endogenous pathway; protein N(6)-(lipoyl)lysine from octanoyl-[acyl-carrier-protein]: step 1/2. Functionally, catalyzes the transfer of endogenously produced octanoic acid from octanoyl-acyl-carrier-protein onto the lipoyl domains of lipoate-dependent enzymes. Lipoyl-ACP can also act as a substrate although octanoyl-ACP is likely to be the physiological substrate. This chain is Octanoyltransferase, found in Polynucleobacter asymbioticus (strain DSM 18221 / CIP 109841 / QLW-P1DMWA-1) (Polynucleobacter necessarius subsp. asymbioticus).